A 523-amino-acid chain; its full sequence is 2-isopropylmalate synthase (523 aa).

In terms of domain architecture, Pyruvate carboxyltransferase spans 5-267 (VIIFDTTLRD…ETGINAKEIH (263 aa)). Residues aspartate 14, histidine 202, histidine 204, and asparagine 238 each coordinate Mn(2+). A regulatory domain region spans residues 392–523 (KLQQLVVHSD…QQNKRELGGV (132 aa)).

This sequence belongs to the alpha-IPM synthase/homocitrate synthase family. LeuA type 1 subfamily. Homodimer. Mn(2+) is required as a cofactor.

The protein resides in the cytoplasm. The catalysed reaction is 3-methyl-2-oxobutanoate + acetyl-CoA + H2O = (2S)-2-isopropylmalate + CoA + H(+). The protein operates within amino-acid biosynthesis; L-leucine biosynthesis; L-leucine from 3-methyl-2-oxobutanoate: step 1/4. Functionally, catalyzes the condensation of the acetyl group of acetyl-CoA with 3-methyl-2-oxobutanoate (2-ketoisovalerate) to form 3-carboxy-3-hydroxy-4-methylpentanoate (2-isopropylmalate). The chain is 2-isopropylmalate synthase from Shewanella pealeana (strain ATCC 700345 / ANG-SQ1).